The primary structure comprises 395 residues: MVEERKPHINVGTIGHVDHGKTTLTAALTTVLAKRLSGEGNKSVKYDEIDKAPEEKARGITISTAHVEYETENRHYAHVDCPGHADYIKNMITGAAQMDAAILVVSATDGAMPQTREHILLAKQVGVKDIVVWMNKCDVVDDEEMLSLVEMEIRELLSKYGYPGDDIDVVRGSAVKALEEETGSGVWSEKIMELMNALEKISLPTREKDKPFLMSIEDVFSIPGRGTVVTGRIERGVIRVGDKIEIVGLRDIQSTVCTGVEMFHKALDAGEAGDNAGILLRGIKKEDVERGQVLSAPGQIHSYKKFKAEVYILKKEEGGRHTPFFSNYQPQFYVRTTDVTGSIKLPEGVEMVMPGDNISIEVSLDKPVAIDKGLRFAIREGGRTVGSGIITEILE.

The region spanning 6 to 205 (KPHINVGTIG…NALEKISLPT (200 aa)) is the tr-type G domain. A G1 region spans residues 15–22 (GHVDHGKT). 15-22 (GHVDHGKT) is a GTP binding site. Residue T22 coordinates Mg(2+). The G2 stretch occupies residues 59 to 63 (GITIS). The interval 80–83 (DCPG) is G3. GTP-binding positions include 80–84 (DCPGH) and 135–138 (NKCD). Residues 135–138 (NKCD) are G4. The interval 173 to 175 (SAV) is G5.

Belongs to the TRAFAC class translation factor GTPase superfamily. Classic translation factor GTPase family. EF-Tu/EF-1A subfamily. Monomer.

Its subcellular location is the cytoplasm. The enzyme catalyses GTP + H2O = GDP + phosphate + H(+). Functionally, GTP hydrolase that promotes the GTP-dependent binding of aminoacyl-tRNA to the A-site of ribosomes during protein biosynthesis. The protein is Elongation factor Tu of Ehrlichia chaffeensis (strain ATCC CRL-10679 / Arkansas).